A 718-amino-acid chain; its full sequence is MQSPTLLTFDLPPESRAMSVPFPQRRFSRVSRTQMVRFPDSALAWLQDLAHLTPTDFSLKDEVRNTQSHHLDSAWTSGTVKLRQKPVSFVSAGYSEPLKLLEDIEQDKVPPGEATESKADDMDITTVDVNLNVSAEAVIEKTTLVELDSAAKGKMVLSNSTSQDNPSSETPQEQAQDLFFFDVSGDKAIRDKHRAVHPPPLVPIRKPSLAESDSSEEVILFRGRAGNAKTVPQSNFVVRNGVATNTTTAITPTGDKTKPTAAEETSLRDDPEVIPVAREKRAGRQRSRSKASKIPKTDEDDEEDAILADYIANMSANPEDDFISDQLRSFNNRRDLGGDNFALNLGSGDENDMPVVEDLSGDEQQAESSGSGLSDADEDNGDENDEADEDDDMDADMDDEGLARLLAKQEELGLGSDELVLIPESFGVSKRGAKKGGQKRATPSSFAKSANASSVADAFDDLDLADWTVPVPRKRRSKQPPNFNISDSEIEAKLKLDWSRDRERKKERKLARESLRGQGLLDKNASPDDLRVKYPVGLRLEDFKTELVAFLISSDERLEFPPLDKHGRMVLHQLALKFNVKSQSTGKGTTRRPVLYRSKRTITFKPHQITEATRQVDGAARRVGRKYFPRADVAGPRGDTPRDGFRGSAHVSVKALVLREGEVVGASAPELGQENKGRAMLEKMGWSKGMALGALENKGILEPVAQVVKKSKAGLGRT.

Disordered regions lie at residues 247 to 301 (TTAI…DEDD), 341 to 404 (FALN…GLAR), and 430 to 452 (KRGAKKGGQKRATPSSFAKSANA). Residues 265 to 282 (TSLRDDPEVIPVAREKRA) show a composition bias toward basic and acidic residues. The segment covering 283–293 (GRQRSRSKASK) has biased composition (basic residues). Positions 375–400 (DADEDNGDENDEADEDDDMDADMDDE) are enriched in acidic residues. Residues 442–452 (TPSSFAKSANA) are compositionally biased toward polar residues. An R3H domain is found at 537-599 (GLRLEDFKTE…TRRPVLYRSK (63 aa)). Residues 673 to 718 (QENKGRAMLEKMGWSKGMALGALENKGILEPVAQVVKKSKAGLGRT) form the G-patch domain.

Belongs to the SQS1 family.

The protein resides in the cytoplasm. The protein localises to the nucleus. Its function is as follows. May be involved in splicing. The sequence is that of Protein SQS1 (SQS1) from Podospora anserina (Pleurage anserina).